The sequence spans 241 residues: DNA repair protein RecO (241 aa).

Belongs to the RecO family.

Functionally, involved in DNA repair and RecF pathway recombination. The polypeptide is DNA repair protein RecO (Rickettsia canadensis (strain McKiel)).